The chain runs to 207 residues: Ras-related protein Rab7A (207 aa).

Residues 15 to 22 (GDSGVGKT), 63 to 67 (DTAGQ), and 125 to 128 (NKID) each bind GTP. S-geranylgeranyl cysteine attachment occurs at residues C205 and C207. C207 is modified (cysteine methyl ester).

It belongs to the small GTPase superfamily. Rab family.

It localises to the cell membrane. Functionally, protein transport. Probably involved in vesicular traffic. This chain is Ras-related protein Rab7A, found in Mesembryanthemum crystallinum (Common ice plant).